Here is a 177-residue protein sequence, read N- to C-terminus: MSRVAKNPVKLPSGVEVKLVGQQLSVKGAKGTLELIIHSSVEIVEEAGELRFAARNGDQQTRAMAGTTRALVNNMVQGVSQGFERKLQLVGVGYKAQAKGTVLNLALGFSHPVDYELPNGITAETPSQTDILIRGIDKQLVGQVAAEIRDFRRPEPYKGKGVRYADEVVRRKEAKKK.

It belongs to the universal ribosomal protein uL6 family. In terms of assembly, part of the 50S ribosomal subunit.

Its function is as follows. This protein binds to the 23S rRNA, and is important in its secondary structure. It is located near the subunit interface in the base of the L7/L12 stalk, and near the tRNA binding site of the peptidyltransferase center. This is Large ribosomal subunit protein uL6 from Pseudomonas syringae pv. tomato (strain ATCC BAA-871 / DC3000).